We begin with the raw amino-acid sequence, 343 residues long: L-ornithine/L-arginine 3-hydroxylase (343 aa).

Fe cation is bound by residues histidine 147 and glutamate 149. Positions 199–215 are enriched in polar residues; it reads MPDNSHLPQNTAESTGD. The segment at 199–218 is disordered; the sequence is MPDNSHLPQNTAESTGDPTK. Fe cation is bound at residue histidine 302. 2-oxoglutarate is bound at residue arginine 316.

Belongs to the clavaminate synthase family. It depends on Fe(2+) as a cofactor.

It catalyses the reaction L-ornithine + 2-oxoglutarate + O2 = (3S)-3-hydroxy-L-ornithine + succinate + CO2. The catalysed reaction is L-arginine + 2-oxoglutarate + O2 = (2S,3S)-hydroxyarginine + succinate + CO2. Its function is as follows. Alpha-ketoglutarate-dependent dioxygenase that in vitro catalyzes the regio- and stereoselective hydroxylation of L-ornithine and L-arginine, leading to (3S)-3-hydroxy-L-ornithine and (3S)-3-hydroxy-L-arginine, respectively. Cannot use L-lysine, D-ornithine, or D-arginine as substrate. The sequence is that of L-ornithine/L-arginine 3-hydroxylase from Catenulispora acidiphila (strain DSM 44928 / JCM 14897 / NBRC 102108 / NRRL B-24433 / ID139908).